A 275-amino-acid polypeptide reads, in one-letter code: Small ribosomal subunit protein uS3 (275 aa).

The KH type-2 domain occupies 38–106; it reads IRKLLATGLE…QVQLNILEVK (69 aa). The tract at residues 215–275 is disordered; sequence AAAAPASDRP…AEAPAESTES (61 aa). The segment covering 237–275 has biased composition (low complexity); the sequence is SGSAGTTATSTEAGRAATSDAPAAGTAAAAEAPAESTES.

This sequence belongs to the universal ribosomal protein uS3 family. Part of the 30S ribosomal subunit. Forms a tight complex with proteins S10 and S14.

Functionally, binds the lower part of the 30S subunit head. Binds mRNA in the 70S ribosome, positioning it for translation. The sequence is that of Small ribosomal subunit protein uS3 from Mycolicibacterium smegmatis (strain ATCC 700084 / mc(2)155) (Mycobacterium smegmatis).